A 300-amino-acid polypeptide reads, in one-letter code: C-4 methylsterol oxidase erg25 (300 aa).

Residues 140–276 (TLFFFLEDTW…FRWWDAVLKT (137 aa)) enclose the Fatty acid hydroxylase domain. Positions 154-158 (HRLFH) match the Histidine box-1 motif. Residues 167–171 (HKVHH) carry the Histidine box-2 motif. Residues 186 to 206 (PLEIILLGAGTVFVPLMWCYF) traverse the membrane as a helical segment. Positions 251–257 (HHDYHHM) match the Histidine box-3 motif.

It belongs to the sterol desaturase family. As to quaternary structure, heterotetramer of erg25, erg26, erg27 and erg28. Erg28 acts as a scaffold to tether erg27 and other 4,4-demethylation-related enzymes, forming a demethylation enzyme complex, in the endoplasmic reticulum. The cofactor is Fe cation.

The protein localises to the endoplasmic reticulum membrane. It carries out the reaction 4,4-dimethyl-5alpha-cholesta-8,24-dien-3beta-ol + 6 Fe(II)-[cytochrome b5] + 3 O2 + 5 H(+) = 4beta-methylzymosterol-4alpha-carboxylate + 6 Fe(III)-[cytochrome b5] + 4 H2O. The enzyme catalyses 4alpha-methylzymosterol + 6 Fe(II)-[cytochrome b5] + 3 O2 + 5 H(+) = 4alpha-carboxyzymosterol + 6 Fe(III)-[cytochrome b5] + 4 H2O. It functions in the pathway steroid biosynthesis; zymosterol biosynthesis; zymosterol from lanosterol: step 3/6. The protein operates within steroid metabolism; ergosterol biosynthesis. C-4 methylsterol oxidase; part of the third module of ergosterol biosynthesis pathway that includes by the late steps of the pathway. Erg25 is a catalytic component of the C-4 demethylation complex that catalyzes the three-step monooxygenation required for the demethylation of 4,4-dimethyl and 4alpha-methylsterols. The third module or late pathway involves the ergosterol synthesis itself through consecutive reactions that mainly occur in the endoplasmic reticulum (ER) membrane. Firstly, the squalene synthase erg9 catalyzes the condensation of 2 farnesyl pyrophosphate moieties to form squalene, which is the precursor of all steroids. Secondly, squalene is converted into lanosterol by the consecutive action of the squalene epoxidase erg1 and the lanosterol synthase erg7. The lanosterol 14-alpha-demethylase erg11/cyp1 catalyzes C14-demethylation of lanosterol to produce 4,4'-dimethyl cholesta-8,14,24-triene-3-beta-ol. In the next steps, a complex process involving various demethylation, reduction and desaturation reactions catalyzed by the C-14 reductase erg24 and the C-4 demethylation complex erg25-erg26-erg27 leads to the production of zymosterol. Erg28 likely functions in the C-4 demethylation complex reaction by tethering erg26 and Erg27 to the endoplasmic reticulum or to facilitate interaction between these proteins. Then, the sterol 24-C-methyltransferase erg6 catalyzes the methyl transfer from S-adenosyl-methionine to the C-24 of zymosterol to form fecosterol. The C-8 sterol isomerase erg2 catalyzes the reaction which results in unsaturation at C-7 in the B ring of sterols and thus converts fecosterol to episterol. The sterol-C5-desaturases erg31 and erg32 then catalyze the introduction of a C-5 double bond in the B ring to produce 5-dehydroepisterol. The C-22 sterol desaturase erg5 further converts 5-dehydroepisterol into ergosta-5,7,22,24(28)-tetraen-3beta-ol by forming the C-22(23) double bond in the sterol side chain. Finally, ergosta-5,7,22,24(28)-tetraen-3beta-ol is substrate of the C-24(28) sterol reductase erg4 to produce ergosterol. In the genus Schizosaccharomyces, a second route exists between lanosterol and fecosterol, via the methylation of lanosterol to eburicol by erg6, followed by C14-demethylation by erg11/cyp1 and C4-demethylation by the demethylation complex erg25-erg26-erg27. The polypeptide is C-4 methylsterol oxidase erg25 (Schizosaccharomyces pombe (strain 972 / ATCC 24843) (Fission yeast)).